The following is a 596-amino-acid chain: MHFSVRLSLFLTLASSLPLVSAVPQHEDQAYTFSSSGRSATTDTDPALDVRQETLRTPSAWTRLRDSLVESVWGLPQRSEGCESRPRNRAKTVSRAPATLQARYGEDVVLRFTIKNQEEVKALVEASNILFLDVWGSHDDWVDIRLSRDVIPSLLGLLPPSLQTSHVPLIRDLAQTIYESYPKAGSAPPSQQGPTTRRFSPSASTSKSKPHEAKNIFFQDYQPLSVLLPWMRLLVSMFSSHTTLISVGTTAEGRDIPALRVGVHPTNNAQQAPRRRTIVISGGTHAREWISVSTVSYIAYSFITGYGKSKSITKLLEQFDYVFIPTVNPDGYAYTFSTDRLWRKNRQQTSLSFCPGIDLDHSWGYEWDGNATRSNPCSESYAGDQPFEAVEAREIASWARNEVTVNNVHFVAFVDLHSYSQQILYPYGHSCAHLPANLENLEELGAGLAKAIRKSSRENYDVKAACRGIVASCTGDKDADEPVTSSALERTAGSALDWFFHDLDVRFSYQIKLRDRGSYGFLLPREHIVPTGKEIYRAMVAMGKFLVSPHVLEEDIDGLRASEEPQDYDNDLEDGEDDKDEQDSTVFRAQADDLQS.

Residues 1-22 (MHFSVRLSLFLTLASSLPLVSA) form the signal peptide. A propeptide spanning residues 23–184 (VPQHEDQAYT…QTIYESYPKA (162 aa)) is cleaved from the precursor. The segment at 181-210 (YPKAGSAPPSQQGPTTRRFSPSASTSKSKP) is disordered. The span at 188–207 (PPSQQGPTTRRFSPSASTSK) shows a compositional bias: polar residues. Residues 220–546 (DYQPLSVLLP…RAMVAMGKFL (327 aa)) enclose the Peptidase M14 domain. Zn(2+) is bound by residues His-285 and Glu-288. Substrate-binding positions include 285–288 (HARE), Arg-343, and 360–361 (DH). Cys-354 and Cys-377 are oxidised to a cystine. Asn-370 carries an N-linked (GlcNAc...) asparagine glycan. His-417 provides a ligand contact to Zn(2+). Residue 418–419 (SY) coordinates substrate. Positions 557–596 (DGLRASEEPQDYDNDLEDGEDDKDEQDSTVFRAQADDLQS) are disordered. A compositionally biased stretch (acidic residues) spans 564-583 (EPQDYDNDLEDGEDDKDEQD).

It belongs to the peptidase M14 family. It depends on Zn(2+) as a cofactor.

The protein resides in the vacuole. Its subcellular location is the secreted. Functionally, inactive carboxypeptidase that may play a role in cell wall organization and biogenesis. The sequence is that of Inactive metallocarboxypeptidase ECM14 (ECM14) from Trichophyton verrucosum (strain HKI 0517).